The chain runs to 461 residues: mRNA cap guanine-N(7) methyltransferase (461 aa).

The interval 1–117 is disordered; sequence MESSVKASVD…RKLQPQDALE (117 aa). Residues Ser11, Ser15, Ser16, and Ser58 each carry the phosphoserine modification. Polar residues-rich tracts occupy residues 14–29 and 49–58; these read ESSP…SGQR and EQNSSYVQDS. Basic and acidic residues predominate over residues 65 to 93; that stretch reads LDVEIILDEKHSEDDGGASKRSKLERGGG. Phosphoserine occurs at positions 94 and 99. The short motif at 107–109 is the Nuclear localization signal element; that stretch reads KRK. The 309-residue stretch at 152-460 folds into the mRNA cap 0 methyltransferase domain; sequence SRIFYLRNFN…IYLVFAFEKQ (309 aa). 161-162 serves as a coordination point for mRNA; it reads NN. The S-adenosyl-L-methionine site is built by Lys165, Gly190, Asp212, Asp246, Gln269, and Tyr274.

This sequence belongs to the class I-like SAM-binding methyltransferase superfamily. mRNA cap 0 methyltransferase family. In terms of assembly, interacts with importin alpha, leading to stimulate both RNA-binding and methyltransferase activity. Interaction with importin alpha and beta is required for its nuclear localization, importin beta dissociating in response to RanGTP, allowing RNMT-importin alpha to bind RNA substrates. Interacts with elongating form of polymerase II and RNGTT. Interacts with RAMAC, this interaction significantly enhances RNA-binding and cap methyltransferase activity.

It localises to the nucleus. The enzyme catalyses a 5'-end (5'-triphosphoguanosine)-ribonucleoside in mRNA + S-adenosyl-L-methionine = a 5'-end (N(7)-methyl 5'-triphosphoguanosine)-ribonucleoside in mRNA + S-adenosyl-L-homocysteine. Its activity is regulated as follows. Methyltransferase activity is activated by RAMAC. Functionally, catalytic subunit of the mRNA-capping methyltransferase RNMT:RAMAC complex that methylates the N7 position of the added guanosine to the 5'-cap structure of mRNAs. Binds RNA containing 5'-terminal GpppC. This Rattus norvegicus (Rat) protein is mRNA cap guanine-N(7) methyltransferase (Rnmt).